Reading from the N-terminus, the 338-residue chain is Envelope glycoprotein K (338 aa).

The signal sequence occupies residues 1 to 30; the sequence is MLAVRSLQHLSTVVLITAYGLVLVWYTVFG. Residues 31–121 are Extracellular-facing; the sequence is ASPLHRCIYA…VNCLETLWYT (91 aa). The segment at 31–121 is involved in fusion; that stretch reads ASPLHRCIYA…VNCLETLWYT (91 aa). N-linked (GlcNAc...) asparagine; by host glycans are attached at residues Asn48 and Asn58. Residues 122–140 form a helical membrane-spanning segment; the sequence is RVRLVVVGWFLYLAFVALH. The Cytoplasmic segment spans residues 141 to 212; it reads QRRCMFGVVS…DPVTFLYHRP (72 aa). A helical transmembrane segment spans residues 213–233; that stretch reads AIGVIVGCELMLRFVAVGLIV. At 234–243 the chain is on the extracellular side; the sequence is GTAFISRGAC. The chain crosses the membrane as a helical span at residues 244–264; sequence AITYPLFLTITTWCFVSTIGL. At 265 to 301 the chain is on the cytoplasmic side; that stretch reads TELYCILRRGPAPKNADKAAAPGRSKGLSGVCGRCCS. Residues 265–301 form an interaction with UL20 region; sequence TELYCILRRGPAPKNADKAAAPGRSKGLSGVCGRCCS. A helical membrane pass occupies residues 302–322; that stretch reads IILSGIAVRLCYIAVVAGVVL. Residues 323–338 lie on the Extracellular side of the membrane; that stretch reads VALHYEQEIQRRLFDV.

Belongs to the alphaherpesvirinae glycoprotein K family. Interacts (via UL20 interaction region) with protein UL20 (via N-terminus); this interaction probably plays a role in the coordinate transport of protein UL20 and gK to the trans-Golgi network (TGN), and is required for the cell surface expression of gK. Post-translationally, N-glycosylated.

It localises to the host cell membrane. The protein localises to the host endosome membrane. It is found in the host Golgi apparatus membrane. Functionally, glycoprotein that probably modulates membrane fusion events during secondary envelopment of cytoplasmic capsids that bud into specific trans-Golgi network (TGN)-derived membranes. Also plays a role, together with gB, in virus-induced cell-to-cell fusion (syncytia formation). Seems to block fusion of virions with infected-cell membranes. This chain is Envelope glycoprotein K (gK), found in Homo sapiens (Human).